We begin with the raw amino-acid sequence, 514 residues long: MAQTLQMEIPNFGNSILECLNEQRLQGLYCDVSVVVKGHAFKAHRAVLAASSSYFRDLFNSSRSAVVELPAAVQPQSFQQILTFCYTGRLSMNMGDQFLLIYTAGFLQIQEIMEKGTEFFLKVSSPSCDSQGLHPEEAPSSEPQSPVAQILGWPACSTPLPLVSRVKTEQELDSVQCTPMAKRLWDSSQKEAGGSGGNNGSRKMAKFSTPDLAPNRMPQPVSVATATAAVAVVAVGGCVSGPSMSERTSPGTSSAYTSDSPSSYHNEEDEEEDAGEEGTDEQYRQICNMYTMYSMLNVGQTVEKVEALPEQVVLESHSRIRVRQDLASLPAELINQIGNRCHPKLYDEGDPSEKLELVTGTNVYITRAQLMNCHVSAGTRHKVLLRRLLASFFDRNTLANSCGTGIRSSTNDPRRKPLDSRVLHAVKYYCQNFAPNFKESEMNAIAADMCTNARRVVRKSWLPKTKPLHLVEGDNYSSFISDTGKIEPDMMSMEHSFETASHDGEAGPSAEVLQ.

The BTB domain occupies 30-94; the sequence is CDVSVVVKGH…CYTGRLSMNM (65 aa). A Glycyl lysine isopeptide (Lys-Gly) (interchain with G-Cter in SUMO1); alternate cross-link involves residue K167. A Glycyl lysine isopeptide (Lys-Gly) (interchain with G-Cter in SUMO2); alternate cross-link involves residue K167. K182 participates in a covalent cross-link: Glycyl lysine isopeptide (Lys-Gly) (interchain with G-Cter in SUMO2). Disordered stretches follow at residues 183 to 218 and 241 to 279; these read RLWDSSQKEAGGSGGNNGSRKMAKFSTPDLAPNRMP and GPSMSERTSPGTSSAYTSDSPSSYHNEEDEEEDAGEEGT. Phosphoserine is present on S187. Over residues 242-251 the composition is skewed to polar residues; that stretch reads PSMSERTSPG. S245 carries the phosphoserine; by PKC modification. The span at 252–264 shows a compositional bias: low complexity; the sequence is TSSAYTSDSPSSY. The segment covering 267 to 279 has biased composition (acidic residues); the sequence is EEDEEEDAGEEGT. Glycyl lysine isopeptide (Lys-Gly) (interchain with G-Cter in SUMO2) cross-links involve residues K304, K438, K466, and K485. The region spanning 360 to 457 is the BEN domain; sequence GTNVYITRAQ…DMCTNARRVV (98 aa). 2 positions are modified to phosphoserine: S492 and S496.

In terms of assembly, homooligomer; mediated by the BTB domain. Both isoforms interact with HDAC3 and HDAC4. Interacts (via BTB domain) with CUL3, PSMD7 and RCOR1. Post-translationally, phosphorylated by protein kinase C (PKC). In terms of tissue distribution, highly expressed in the hippocampus, brain cortex, cerebellum and brainstem. Expressed in the nucleus accumbens, olfactory tubercle, the striatum, frontal and parietal cortex and ventral pallidum. Weakly expressed in the heart, liver, kidney, spleen, testis, and skeletal muscle. Isoform 2 is expressed in the brain and liver, less abundantly expressed in the brain than isoform 1.

The protein resides in the nucleus. It localises to the cytoplasm. Its function is as follows. Functions as a transcriptional repressor. Isoform 1 is a stronger transcriptional repressor than isoform 2. Seems to function as a transcriptional corepressor in neuronal cells through recruitment of HDAC3 and HDAC4. Contributes to tumor progression, and tumor cell proliferation and survival. This may be mediated at least in part through repressing transcriptional activity of GADD45GIP1. Required for recruiting the proteasome from the nucleus to the cytoplasm and dendritic spines. This is Nucleus accumbens-associated protein 1 (Nacc1) from Rattus norvegicus (Rat).